Consider the following 246-residue polypeptide: MQFDIIGDVHGCYDELMELIDKLGYEYKRGSYDHPDGRLLAFVGDLTDRGPHSLEVIRLVSHMVKKKTAYYVPGNHCNKLYRYMIGRKVQVKHGLETTVAELNALSEEERIEVIAQFKELYEQAPLYHSFPEDKLVITHAGIREDDIGSYGKRVETFVLYGDITGETNPDGTPVRRDWAATYQGDWWIVYGHTPVRRPRIIHRTVNIDTGCVFGGALTALRFPEIEFVSIPSRQPLVSEKFRNFPG.

It belongs to the PrpE family. Requires Ni(2+) as cofactor.

It carries out the reaction P(1),P(4)-bis(5'-guanosyl) tetraphosphate + H2O = GMP + GTP + 2 H(+). Asymmetrically hydrolyzes Ap4p to yield AMP and ATP. The sequence is that of Bis(5'-nucleosyl)-tetraphosphatase PrpE [asymmetrical] from Halalkalibacterium halodurans (strain ATCC BAA-125 / DSM 18197 / FERM 7344 / JCM 9153 / C-125) (Bacillus halodurans).